The following is a 149-amino-acid chain: MAKIILRHLIETPVRYEQEFEARGLEDCRLDHALYALPGPTTVDLGKARAAQAPPVDAAEMPPQRGESRFQVLLDVVQFLPEDIIIQTFEGWLLIKAQHGTRMDEHGFISRSFTRQYKLPDGIETKDLSAILCHDGILVVEVKDSAGTK.

The sHSP domain occupies 47–149 (KARAAQAPPV…VEVKDSAGTK (103 aa)).

This sequence belongs to the small heat shock protein (HSP20) family.

It localises to the cytoplasm. Its subcellular location is the nucleus. Its function is as follows. Inhibitor of actin polymerization. This Bos taurus (Bovine) protein is Heat shock protein beta-3 (HSPB3).